The primary structure comprises 295 residues: Phosphoserine phosphatase, chloroplastic (295 aa).

Residues 1-54 (MEALTTSRVVPVQVPCRKLSSLFANFSCLELRRYPCRGLVSIMNHPKLLRPVTA) constitute a chloroplast transit peptide. Residue aspartate 89 is the Nucleophile of the active site. Mg(2+)-binding residues include aspartate 89 and aspartate 91. The Proton donor role is filled by aspartate 91. Residues glutamate 98, arginine 134, 178–179 (SG), and lysine 227 each bind substrate. A Mg(2+)-binding site is contributed by aspartate 248.

This sequence belongs to the HAD-like hydrolase superfamily. SerB family. Mg(2+) serves as cofactor. Ubiquitous. Mainly expressed in shoot and root meristems, vasculature, pollen, anthers, carpels and seeds.

The protein resides in the plastid. Its subcellular location is the chloroplast. The catalysed reaction is O-phospho-L-serine + H2O = L-serine + phosphate. The enzyme catalyses O-phospho-D-serine + H2O = D-serine + phosphate. The protein operates within amino-acid biosynthesis; L-serine biosynthesis; L-serine from 3-phospho-D-glycerate: step 3/3. Approximately 60% inhibition of PSP activity is observed in presence of 10 mM serine. Functionally, catalyzes the last step in the plastidial phosphorylated pathway of serine biosynthesis (PPSB). The reaction mechanism proceeds via the formation of a phosphoryl-enzyme intermediates. Required for embryo, pollen and root development. May be required preferentially for serine biosynthesis in non-photosynthetic tissues. This Arabidopsis thaliana (Mouse-ear cress) protein is Phosphoserine phosphatase, chloroplastic (PSP).